The sequence spans 270 residues: Inositol monophosphatase (270 aa).

4 residues coordinate Mg(2+): Glu71, Asp91, Leu93, and Asp94. Glu71 is a binding site for substrate. Residues 93-96 (LDGT), 194-196 (GSC), Glu213, and Asp221 contribute to the substrate site. Mg(2+) is bound at residue Asp221.

The protein belongs to the inositol monophosphatase superfamily. Mg(2+) is required as a cofactor.

The enzyme catalyses a myo-inositol phosphate + H2O = myo-inositol + phosphate. Its pathway is polyol metabolism; myo-inositol biosynthesis; myo-inositol from D-glucose 6-phosphate: step 2/2. Its activity is regulated as follows. Inhibited by Li(+). Functionally, responsible for the provision of inositol required for synthesis of phosphatidylinositol and polyphosphoinositides. The polypeptide is Inositol monophosphatase (IMP1) (Mesembryanthemum crystallinum (Common ice plant)).